Reading from the N-terminus, the 400-residue chain is MAP kinase-activated protein kinase 2 (400 aa).

The tract at residues M1–F43 is disordered. S9 carries the phosphoserine modification. Positions P10–Q42 are enriched in pro residues. The residue at position 25 (T25) is a Phosphothreonine. In terms of domain architecture, Protein kinase spans K64 to I325. Residues L70 to V78 and K93 each bind ATP. E139–L141 is a binding site for staurosporine. D186 serves as the catalytic Proton acceptor. A Phosphothreonine; by MAPK14 modification is found at T222. S272 bears the Phosphoserine; by MAPK14 mark. The residue at position 328 (S328) is a Phosphoserine; by autocatalysis. Residues S328–R364 form an autoinhibitory helix region. Residue T334 is modified to Phosphothreonine; by MAPK14. K353 participates in a covalent cross-link: Glycyl lysine isopeptide (Lys-Gly) (interchain with G-Cter in SUMO). A Nuclear export signal (NES) motif is present at residues M356–V365. Residues D366–A390 are p38 MAPK-binding site. 2 short sequence motifs (bipartite nuclear localization signal) span residues K371–K374 and K385–K389.

Belongs to the protein kinase superfamily. CAMK Ser/Thr protein kinase family. Heterodimer with p38-alpha/MAPK14; this heterodimer forms a stable complex: molecules are positioned 'face to face' so that the ATP-binding sites of both kinases are at the heterodimer interface. Interacts with PHC2. Interacts with HSF1. Sumoylation inhibits the protein kinase activity. In terms of processing, phosphorylated and activated by MAP kinase p38-alpha/MAPK14 at Thr-222, Ser-272 and Thr-334. Expressed in all tissues examined.

It localises to the cytoplasm. The protein localises to the nucleus. It catalyses the reaction L-seryl-[protein] + ATP = O-phospho-L-seryl-[protein] + ADP + H(+). The catalysed reaction is L-threonyl-[protein] + ATP = O-phospho-L-threonyl-[protein] + ADP + H(+). Activated following phosphorylation by p38-alpha/MAPK14 following various stresses. Inhibited following sumoylation. Specifically inhibited by pyrrolopyridine inhibitors. In terms of biological role, stress-activated serine/threonine-protein kinase involved in cytokine production, endocytosis, reorganization of the cytoskeleton, cell migration, cell cycle control, chromatin remodeling, DNA damage response and transcriptional regulation. Following stress, it is phosphorylated and activated by MAP kinase p38-alpha/MAPK14, leading to phosphorylation of substrates. Phosphorylates serine in the peptide sequence, Hyd-X-R-X(2)-S, where Hyd is a large hydrophobic residue. Phosphorylates ALOX5, CDC25B, CDC25C, CEP131, ELAVL1, HNRNPA0, HSP27/HSPB1, KRT18, KRT20, LIMK1, LSP1, PABPC1, PARN, PDE4A, RCSD1, RPS6KA3, TAB3 and TTP/ZFP36. Phosphorylates HSF1; leading to the interaction with HSP90 proteins and inhibiting HSF1 homotrimerization, DNA-binding and transactivation activities. Mediates phosphorylation of HSP27/HSPB1 in response to stress, leading to the dissociation of HSP27/HSPB1 from large small heat-shock protein (sHsps) oligomers and impairment of their chaperone activities and ability to protect against oxidative stress effectively. Involved in inflammatory response by regulating tumor necrosis factor (TNF) and IL6 production post-transcriptionally: acts by phosphorylating AU-rich elements (AREs)-binding proteins ELAVL1, HNRNPA0, PABPC1 and TTP/ZFP36, leading to the regulation of the stability and translation of TNF and IL6 mRNAs. Phosphorylation of TTP/ZFP36, a major post-transcriptional regulator of TNF, promotes its binding to 14-3-3 proteins and reduces its ARE mRNA affinity, leading to inhibition of dependent degradation of ARE-containing transcripts. Phosphorylates CEP131 in response to cellular stress induced by ultraviolet irradiation which promotes binding of CEP131 to 14-3-3 proteins and inhibits formation of novel centriolar satellites. Also involved in late G2/M checkpoint following DNA damage through a process of post-transcriptional mRNA stabilization: following DNA damage, relocalizes from nucleus to cytoplasm and phosphorylates HNRNPA0 and PARN, leading to stabilization of GADD45A mRNA. Involved in toll-like receptor signaling pathway (TLR) in dendritic cells: required for acute TLR-induced macropinocytosis by phosphorylating and activating RPS6KA3. This is MAP kinase-activated protein kinase 2 (MAPKAPK2) from Homo sapiens (Human).